The sequence spans 74 residues: Putative defensin-like protein 27 (74 aa).

The first 19 residues, 1–19 (MVHPRFVFFAFLALSVLLA), serve as a signal peptide directing secretion. 4 disulfide bridges follow: C36-C74, C46-C65, C51-C70, and C55-C72.

Belongs to the DEFL family.

The protein resides in the secreted. The sequence is that of Putative defensin-like protein 27 from Arabidopsis thaliana (Mouse-ear cress).